A 310-amino-acid polypeptide reads, in one-letter code: Olfactory receptor 2A7 (310 aa).

At 1–24 (MGDNITSITEFLLLGFPVGPRIQM) the chain is on the extracellular side. Asn-4 is a glycosylation site (N-linked (GlcNAc...) asparagine). The helical transmembrane segment at 25–48 (LLFGLFSLFYVFTLLGNGTILGLI) threads the bilayer. Residues 49 to 56 (SLDSRLHA) are Cytoplasmic-facing. Residues 57 to 78 (PMYFFLSHLAVVDIAYACNTVP) traverse the membrane as a helical segment. Residues 79 to 99 (RMLVNLLHPAKPISFAGRMMQ) lie on the Extracellular side of the membrane. A helical membrane pass occupies residues 100–119 (TFLFSTFAVTECLLLVVMSY). Topologically, residues 120-138 (DLYVAICHPLRYLAIMTWR) are cytoplasmic. A helical membrane pass occupies residues 139-157 (VCITLAVTSWTTGVLLSLI). Residues 158–194 (HLVLLLPLPFCRPQKIYHFFCEILAVLKLACADTHIN) lie on the Extracellular side of the membrane. The helical transmembrane segment at 195–218 (ENMVLAGAISGLVGPLSTIVVSYM) threads the bilayer. Residues 219–235 (CILCAILQIQSREVQRK) are Cytoplasmic-facing. Residues 236-258 (AFCTCFSHLCVIGLFYGTAIIMY) form a helical membrane-spanning segment. At 259–271 (VGPRYGNPKEQKK) the chain is on the extracellular side. A helical membrane pass occupies residues 272–291 (YLLLFHSLFNPMLNPLICSL). Residues 292 to 310 (RNSEVKNTLKRVLGVERAL) are Cytoplasmic-facing.

It belongs to the G-protein coupled receptor 1 family.

Its subcellular location is the cell membrane. Odorant receptor. The sequence is that of Olfactory receptor 2A7 (OR2A7) from Homo sapiens (Human).